The primary structure comprises 527 residues: Calcium and calcium/calmodulin-dependent serine/threonine-protein kinase (527 aa).

Residues 12 to 314 (YEVSEILGRG…AQELLSDPWV (303 aa)) form the Protein kinase domain. 18-26 (LGRGGFSVV) is a binding site for ATP. Residues 25–51 (VVRKGTRKSNNDDEKSQSQSKSQSQSQ) form a disordered region. The span at 41 to 51 (QSQSKSQSQSQ) shows a compositional bias: low complexity. Lys-55 contributes to the ATP binding site. The disordered stretch occupies residues 59–78 (RLGTSNNLPRKKDGGENSTE). The active-site Proton acceptor is the Asp-179. A helical transmembrane segment spans residues 239 to 255 (MWSLGVILYILLSGYPP). Position 279 is a phosphothreonine (Thr-279). The interval 337 to 350 (ARRKLRAAAIASVW) is calmodulin-binding. The stretch at 358 to 379 (TKKLKSLVGSYDLKEDEIENLR) forms a coiled coil. 3 EF-hand domains span residues 408–443 (SLIP…LKNS), 444–479 (KGED…LPYD), and 486–521 (TEPG…DSSL). Positions 421, 423, 425, 427, 432, 457, 459, 461, 463, 468, 499, 501, 503, 505, and 510 each coordinate Ca(2+).

The protein belongs to the protein kinase superfamily. CAMK Ser/Thr protein kinase family. CaMK subfamily. Autophosphorylation.

The protein resides in the membrane. The enzyme catalyses L-seryl-[protein] + ATP = O-phospho-L-seryl-[protein] + ADP + H(+). It catalyses the reaction L-threonyl-[protein] + ATP = O-phospho-L-threonyl-[protein] + ADP + H(+). Activated by calcium. Autophosphorylation may play an important role in the regulation of the kinase activity. Its function is as follows. Protein kinase that recognizes the calcium spiking induced by Nod factors and translates this signal to components controlling nodulation and mycorrhizal infection responses. This chain is Calcium and calcium/calmodulin-dependent serine/threonine-protein kinase (SYM9), found in Pisum sativum (Garden pea).